We begin with the raw amino-acid sequence, 301 residues long: MSIDKSYCGFIAIVGRPNVGKSTLLNKLLGQKISITSRKAQTTRHRIVGIHTEGAYQAIYVDTPGLHMEEKRAINRLMNKAASSSIGDVELVIFVVEGTRWTPDDEMVLNKLREGKAPVILAVNKVDNVQEKADLLPHLQFLASQMNFLDIVPISAETGLNVDTIAAIVRKHLPEATHHFPEDYITDCSQRFMASEIIREKLMRFLGAELPYSVTVEIERFVSNERGGYDINGLILVEREGQKKMVIGNKGAKIKTIGIEARKDMQEMFEAPVHLELWVKVKSGWADDERALRSLGYVDDL.

One can recognise an Era-type G domain in the interval Y7 to E175. The segment at G15–S22 is G1. G15–S22 is a GTP binding site. Positions Q41–H45 are G2. Positions D62–G65 are G3. GTP contacts are provided by residues D62–L66 and N124–D127. Positions N124–D127 are G4. Residues I154 to A156 form a G5 region. The KH type-2 domain occupies L206 to S283.

This sequence belongs to the TRAFAC class TrmE-Era-EngA-EngB-Septin-like GTPase superfamily. Era GTPase family. As to quaternary structure, monomer.

It localises to the cytoplasm. Its subcellular location is the cell inner membrane. An essential GTPase that binds both GDP and GTP, with rapid nucleotide exchange. Plays a role in 16S rRNA processing and 30S ribosomal subunit biogenesis and possibly also in cell cycle regulation and energy metabolism. The sequence is that of GTPase Era from Shigella flexneri serotype 5b (strain 8401).